The chain runs to 482 residues: Dual specificity protein phosphatase 10 (482 aa).

Positions 168–285 (PSQGPVIIDC…FKQNHENLCD (118 aa)) constitute a Rhodanese domain. The interaction with MAP kinases stretch occupies residues 199 to 215 (KISRRRLQQGKITVLDL). The Tyrosine-protein phosphatase domain occupies 321–464 (ELTPILPFLF…LLEFEEDLNN (144 aa)). Cys-408 acts as the Phosphocysteine intermediate in catalysis.

This sequence belongs to the protein-tyrosine phosphatase family. Non-receptor class dual specificity subfamily. As to quaternary structure, monomer. Interacts with MAPK14. Expressed in keratinocytes (at protein level). Detected in brain.

It is found in the cytoplasm. It localises to the nucleus. The catalysed reaction is O-phospho-L-tyrosyl-[protein] + H2O = L-tyrosyl-[protein] + phosphate. It carries out the reaction O-phospho-L-seryl-[protein] + H2O = L-seryl-[protein] + phosphate. It catalyses the reaction O-phospho-L-threonyl-[protein] + H2O = L-threonyl-[protein] + phosphate. In terms of biological role, protein phosphatase involved in the inactivation of MAP kinases. Has a specificity for the MAPK11/MAPK12/MAPK13/MAPK14 subfamily. It preferably dephosphorylates p38. The polypeptide is Dual specificity protein phosphatase 10 (DUSP10) (Homo sapiens (Human)).